The following is a 278-amino-acid chain: NAD-capped RNA hydrolase NudC (278 aa).

Residue Arg84 coordinates substrate. The Zn(2+) site is built by Cys114 and Cys117. Glu127 is a binding site for substrate. Zn(2+) is bound at residue Cys132. Tyr140 contributes to the substrate binding site. Residues 141 to 264 (PRISPSMIVL…SIARYLIEAY (124 aa)) form the Nudix hydrolase domain. A divalent metal cation is bound by residues Ala174, Glu190, and Glu194. A Nudix box motif is present at residues 175-196 (GFVEPGESAEDCVHREVMEEVQ). 208-215 (QCWPFPHS) serves as a coordination point for substrate. Position 235 (Glu235) interacts with a divalent metal cation. Ala257 provides a ligand contact to substrate.

Belongs to the Nudix hydrolase family. NudC subfamily. Homodimer. Mg(2+) is required as a cofactor. It depends on Mn(2+) as a cofactor. Requires Zn(2+) as cofactor.

It catalyses the reaction a 5'-end NAD(+)-phospho-ribonucleoside in mRNA + H2O = a 5'-end phospho-adenosine-phospho-ribonucleoside in mRNA + beta-nicotinamide D-ribonucleotide + 2 H(+). The catalysed reaction is NAD(+) + H2O = beta-nicotinamide D-ribonucleotide + AMP + 2 H(+). It carries out the reaction NADH + H2O = reduced beta-nicotinamide D-ribonucleotide + AMP + 2 H(+). MRNA decapping enzyme that specifically removes the nicotinamide adenine dinucleotide (NAD) cap from a subset of mRNAs by hydrolyzing the diphosphate linkage to produce nicotinamide mononucleotide (NMN) and 5' monophosphate mRNA. The NAD-cap is present at the 5'-end of some mRNAs and stabilizes RNA against 5'-processing. Has preference for mRNAs with a 5'-end purine. Catalyzes the hydrolysis of a broad range of dinucleotide pyrophosphates. This is NAD-capped RNA hydrolase NudC from Pseudomonas syringae pv. tomato (strain ATCC BAA-871 / DC3000).